Here is a 161-residue protein sequence, read N- to C-terminus: Small ribosomal subunit protein uS9 (161 aa).

The span at 1 to 21 shows a compositional bias: polar residues; the sequence is MATLQSLADLNRANTQTSNPE. The tract at residues 1–25 is disordered; it reads MATLQSLADLNRANTQTSNPENEAP.

The protein belongs to the universal ribosomal protein uS9 family.

In Methylorubrum extorquens (strain CM4 / NCIMB 13688) (Methylobacterium extorquens), this protein is Small ribosomal subunit protein uS9.